A 388-amino-acid chain; its full sequence is Leucine aminopeptidase 1 (388 aa).

Positions 1 to 19 (MKSLSLLALAAIAPPAAVA) are cleaved as a signal peptide. A propeptide spanning residues 20–88 (AVVDHQVPFE…SVKSHERIQV (69 aa)) is cleaved from the precursor. N180 carries N-linked (GlcNAc...) asparagine glycosylation. Residues H188, D207, E246, and D273 each contribute to the Zn(2+) site. C322 and C326 are oxidised to a cystine. Residue H355 coordinates Zn(2+).

Belongs to the peptidase M28 family. M28E subfamily. As to quaternary structure, monomer. The cofactor is Zn(2+).

Its subcellular location is the secreted. Its function is as follows. Extracellular aminopeptidase that allows assimilation of proteinaceous substrates. This chain is Leucine aminopeptidase 1 (LAP1), found in Coccidioides posadasii (strain RMSCC 757 / Silveira) (Valley fever fungus).